A 195-amino-acid polypeptide reads, in one-letter code: Putative kinase protein 143R (195 aa).

8-16 contacts ATP; the sequence is GIIGAGKST. Positions 31, 43, and 54 each coordinate substrate. The Proton acceptor role is filled by Glu78. Substrate is bound by residues Arg79 and Glu142.

Belongs to the DCK/DGK family.

This is Putative kinase protein 143R from Acheta domesticus (House cricket).